The sequence spans 80 residues: Cell division protein ZapB (80 aa).

The stretch at 3-80 forms a coiled coil; it reads FEVFEKLESK…ALLGKMEDVQ (78 aa).

This sequence belongs to the ZapB family. As to quaternary structure, homodimer. The ends of the coiled-coil dimer bind to each other, forming polymers. Interacts with FtsZ.

It is found in the cytoplasm. In terms of biological role, non-essential, abundant cell division factor that is required for proper Z-ring formation. It is recruited early to the divisome by direct interaction with FtsZ, stimulating Z-ring assembly and thereby promoting cell division earlier in the cell cycle. Its recruitment to the Z-ring requires functional FtsA or ZipA. The chain is Cell division protein ZapB from Proteus mirabilis (strain HI4320).